The following is a 26-amino-acid chain: Phospholipase A2 homolog A1 (26 aa).

In terms of processing, contains 7 disulfide bonds. In terms of tissue distribution, expressed by the venom gland.

Its subcellular location is the secreted. The sequence is that of Phospholipase A2 homolog A1 from Micrurus pyrrhocryptus (Coral snake).